Consider the following 157-residue polypeptide: Large ribosomal subunit protein mL59 (157 aa).

Belongs to the mitochondrion-specific ribosomal protein mL59 family. In terms of assembly, component of the mitochondrial large ribosomal subunit (mt-LSU). Mature yeast 74S mitochondrial ribosomes consist of a small (37S) and a large (54S) subunit. The 37S small subunit contains a 15S ribosomal RNA (15S mt-rRNA) and 34 different proteins. The 54S large subunit contains a 21S rRNA (21S mt-rRNA) and 46 different proteins.

It is found in the mitochondrion. Component of the mitochondrial ribosome (mitoribosome), a dedicated translation machinery responsible for the synthesis of mitochondrial genome-encoded proteins, including at least some of the essential transmembrane subunits of the mitochondrial respiratory chain. The mitoribosomes are attached to the mitochondrial inner membrane and translation products are cotranslationally integrated into the membrane. This is Large ribosomal subunit protein mL59 (MRPL25) from Saccharomyces cerevisiae (strain ATCC 204508 / S288c) (Baker's yeast).